The chain runs to 261 residues: Ribonuclease HII (261 aa).

An RNase H type-2 domain is found at 71-260 (HYIAGVDEVG…LHKYRHNTLL (190 aa)). Aspartate 77, glutamate 78, and aspartate 169 together coordinate a divalent metal cation.

The protein belongs to the RNase HII family. Mn(2+) serves as cofactor. It depends on Mg(2+) as a cofactor.

Its subcellular location is the cytoplasm. It carries out the reaction Endonucleolytic cleavage to 5'-phosphomonoester.. In terms of biological role, endonuclease that specifically degrades the RNA of RNA-DNA hybrids. In Oceanobacillus iheyensis (strain DSM 14371 / CIP 107618 / JCM 11309 / KCTC 3954 / HTE831), this protein is Ribonuclease HII.